The primary structure comprises 123 residues: Large ribosomal subunit protein bL12 (123 aa).

It belongs to the bacterial ribosomal protein bL12 family. Homodimer. Part of the ribosomal stalk of the 50S ribosomal subunit. Forms a multimeric L10(L12)X complex, where L10 forms an elongated spine to which 2 to 4 L12 dimers bind in a sequential fashion. Binds GTP-bound translation factors.

In terms of biological role, forms part of the ribosomal stalk which helps the ribosome interact with GTP-bound translation factors. Is thus essential for accurate translation. The protein is Large ribosomal subunit protein bL12 of Dechloromonas aromatica (strain RCB).